A 152-amino-acid polypeptide reads, in one-letter code: FMN reductase (NADH) RutF (152 aa).

The protein belongs to the non-flavoprotein flavin reductase family. RutF subfamily.

The enzyme catalyses FMNH2 + NAD(+) = FMN + NADH + 2 H(+). Catalyzes the reduction of FMN to FMNH2 which is used to reduce pyrimidine by RutA via the Rut pathway. The chain is FMN reductase (NADH) RutF from Shigella sonnei (strain Ss046).